The sequence spans 431 residues: 5-methylthioadenosine/S-adenosylhomocysteine deaminase (431 aa).

Residues H66 and H68 each coordinate Zn(2+). Residues E95, R147, and H185 each contribute to the substrate site. H212 is a Zn(2+) binding site. Substrate-binding residues include E215 and D300. D300 contributes to the Zn(2+) binding site.

Belongs to the metallo-dependent hydrolases superfamily. MTA/SAH deaminase family. Zn(2+) is required as a cofactor.

It catalyses the reaction S-adenosyl-L-homocysteine + H2O + H(+) = S-inosyl-L-homocysteine + NH4(+). It carries out the reaction S-methyl-5'-thioadenosine + H2O + H(+) = S-methyl-5'-thioinosine + NH4(+). Catalyzes the deamination of 5-methylthioadenosine and S-adenosyl-L-homocysteine into 5-methylthioinosine and S-inosyl-L-homocysteine, respectively. Is also able to deaminate adenosine. This chain is 5-methylthioadenosine/S-adenosylhomocysteine deaminase, found in Acetivibrio thermocellus (strain ATCC 27405 / DSM 1237 / JCM 9322 / NBRC 103400 / NCIMB 10682 / NRRL B-4536 / VPI 7372) (Clostridium thermocellum).